An 80-amino-acid chain; its full sequence is Translation initiation factor IF-1, chloroplastic (80 aa).

Residues 1 to 72 (MKKQNLIDME…TKGRIIYRLR (72 aa)) enclose the S1-like domain.

It belongs to the IF-1 family. In terms of assembly, component of the 30S ribosomal translation pre-initiation complex which assembles on the 30S ribosome in the order IF-2 and IF-3, IF-1 and N-formylmethionyl-tRNA(fMet); mRNA recruitment can occur at any time during PIC assembly.

The protein localises to the plastid. It is found in the chloroplast. Functionally, one of the essential components for the initiation of protein synthesis. Stabilizes the binding of IF-2 and IF-3 on the 30S subunit to which N-formylmethionyl-tRNA(fMet) subsequently binds. Helps modulate mRNA selection, yielding the 30S pre-initiation complex (PIC). Upon addition of the 50S ribosomal subunit IF-1, IF-2 and IF-3 are released leaving the mature 70S translation initiation complex. In Adiantum capillus-veneris (Maidenhair fern), this protein is Translation initiation factor IF-1, chloroplastic.